The primary structure comprises 282 residues: Ribosomal RNA small subunit methyltransferase I (282 aa).

The protein belongs to the methyltransferase superfamily. RsmI family.

It is found in the cytoplasm. The enzyme catalyses cytidine(1402) in 16S rRNA + S-adenosyl-L-methionine = 2'-O-methylcytidine(1402) in 16S rRNA + S-adenosyl-L-homocysteine + H(+). Functionally, catalyzes the 2'-O-methylation of the ribose of cytidine 1402 (C1402) in 16S rRNA. This is Ribosomal RNA small subunit methyltransferase I from Pseudomonas aeruginosa (strain ATCC 15692 / DSM 22644 / CIP 104116 / JCM 14847 / LMG 12228 / 1C / PRS 101 / PAO1).